The primary structure comprises 901 residues: HTH-type transcriptional regulator MalT (901 aa).

39-46 (SPAGYGKT) is an ATP binding site. The 66-residue stretch at 829 to 894 (ELIHTSPLTQ…AAVQHAQKLL (66 aa)) folds into the HTH luxR-type domain. Residues 853–872 (NEQIAGELEVAATTIKTHIR) constitute a DNA-binding region (H-T-H motif).

This sequence belongs to the MalT family. Monomer in solution. Oligomerizes to an active state in the presence of the positive effectors ATP and maltotriose.

Its activity is regulated as follows. Activated by ATP and maltotriose, which are both required for DNA binding. Positively regulates the transcription of the maltose regulon whose gene products are responsible for uptake and catabolism of malto-oligosaccharides. Specifically binds to the promoter region of its target genes, recognizing a short DNA motif called the MalT box. The chain is HTH-type transcriptional regulator MalT from Shigella sonnei (strain Ss046).